A 347-amino-acid chain; its full sequence is MSATSIQPLLDILFQGKALTREQTASLFSTLIQGEMNEAVMAGMLMALKIRGETIAEISGAADAMRAAAKPFPYPSSKRTEGIIDIVGTGGDGFNTINISTTAAFVAAAAGAKVAKHGNRSVSSKSGSSDLLAQFGIDLTMSPELASRCLESLNLCFLFAPHYHGGVKHAVPVRQALKTRTLFNVLGPLINPARPEFMLLGVYSPELVTPIARVLQALGTQRAMVVHGSGLDEVALHGSTQVAELKDGEIIEYQLTPADFGVPQAQISELEGGEPAQNAQITQSILQGQGSDAHTHAVAINAGCALYLCGLSDSVKAGTALALNTIKSGKAFELLNQLAKVSSETQE.

5-phospho-alpha-D-ribose 1-diphosphate-binding positions include Gly-88, Gly-91–Asp-92, Thr-96, Asn-98–Thr-101, Lys-116–Ser-124, and Ser-128. Residue Gly-88 participates in anthranilate binding. Ser-100 contributes to the Mg(2+) binding site. Residue Asn-119 coordinates anthranilate. Arg-174 serves as a coordination point for anthranilate. Positions 232 and 233 each coordinate Mg(2+).

Belongs to the anthranilate phosphoribosyltransferase family. Homodimer. The cofactor is Mg(2+).

It carries out the reaction N-(5-phospho-beta-D-ribosyl)anthranilate + diphosphate = 5-phospho-alpha-D-ribose 1-diphosphate + anthranilate. Its pathway is amino-acid biosynthesis; L-tryptophan biosynthesis; L-tryptophan from chorismate: step 2/5. Functionally, catalyzes the transfer of the phosphoribosyl group of 5-phosphorylribose-1-pyrophosphate (PRPP) to anthranilate to yield N-(5'-phosphoribosyl)-anthranilate (PRA). This chain is Anthranilate phosphoribosyltransferase, found in Shewanella sp. (strain MR-7).